Here is a 174-residue protein sequence, read N- to C-terminus: Adenine phosphoribosyltransferase (174 aa).

Belongs to the purine/pyrimidine phosphoribosyltransferase family. In terms of assembly, homodimer.

It is found in the cytoplasm. The enzyme catalyses AMP + diphosphate = 5-phospho-alpha-D-ribose 1-diphosphate + adenine. It participates in purine metabolism; AMP biosynthesis via salvage pathway; AMP from adenine: step 1/1. Functionally, catalyzes a salvage reaction resulting in the formation of AMP, that is energically less costly than de novo synthesis. In Nitrosomonas europaea (strain ATCC 19718 / CIP 103999 / KCTC 2705 / NBRC 14298), this protein is Adenine phosphoribosyltransferase.